The primary structure comprises 419 residues: UDP-N-acetylglucosamine 1-carboxyvinyltransferase (419 aa).

22 to 23 (KN) is a phosphoenolpyruvate binding site. Arg-95 is a UDP-N-acetyl-alpha-D-glucosamine binding site. Catalysis depends on Cys-119, which acts as the Proton donor. Cys-119 carries the 2-(S-cysteinyl)pyruvic acid O-phosphothioketal modification. Residues 164–167 (KVSV), Asp-308, and Ile-330 each bind UDP-N-acetyl-alpha-D-glucosamine.

This sequence belongs to the EPSP synthase family. MurA subfamily.

Its subcellular location is the cytoplasm. It carries out the reaction phosphoenolpyruvate + UDP-N-acetyl-alpha-D-glucosamine = UDP-N-acetyl-3-O-(1-carboxyvinyl)-alpha-D-glucosamine + phosphate. The protein operates within cell wall biogenesis; peptidoglycan biosynthesis. Cell wall formation. Adds enolpyruvyl to UDP-N-acetylglucosamine. The polypeptide is UDP-N-acetylglucosamine 1-carboxyvinyltransferase (Rickettsia rickettsii (strain Iowa)).